The sequence spans 358 residues: Dynein axonemal assembly factor 10 (358 aa).

WD repeat units lie at residues 64 to 106, 116 to 155, 163 to 206, 208 to 250, 258 to 298, and 320 to 358; these read EKPK…TPVY, NCIDGVGGVGIGDGAPEIVTGSRDGTVKVWDPRQKDTPVA, EAKR…VRWE, NIKN…PTKG, AHKS…QRSR, and LSTQPISSLDWSPDKKGLCVCTSFDQTVRVLIVTKLNRL.

Interacts with PIH1D1; the interaction associates DNAAF10 with the R2TP complex. Interacts with several dynein axonemal assembly factors.

It localises to the dynein axonemal particle. Key assembly factor specifically required for the stability of axonemal dynein heavy chains in cytoplasm. The sequence is that of Dynein axonemal assembly factor 10 (dnaaf10) from Xenopus laevis (African clawed frog).